The primary structure comprises 330 residues: Aspartate--ammonia ligase (330 aa).

Belongs to the class-II aminoacyl-tRNA synthetase family. AsnA subfamily.

The protein resides in the cytoplasm. The catalysed reaction is L-aspartate + NH4(+) + ATP = L-asparagine + AMP + diphosphate + H(+). It functions in the pathway amino-acid biosynthesis; L-asparagine biosynthesis; L-asparagine from L-aspartate (ammonia route): step 1/1. This chain is Aspartate--ammonia ligase, found in Streptococcus pyogenes serotype M2 (strain MGAS10270).